The primary structure comprises 240 residues: Proteasome subunit beta type-1 (240 aa).

Position 1 is an N-acetylmethionine (Met-1). Residues 1-27 (MLSTAAYRDVERELGMGPHGSAGPVQL) constitute a propeptide that is removed on maturation. Ser-57 carries an O-linked (GlcNAc) serine glycan. Phosphoserine occurs at positions 61 and 67. Position 149 is a phosphotyrosine (Tyr-149). The residue at position 161 (Ser-161) is a Phosphoserine. Residue Lys-203 is modified to N6-acetyllysine. A glycan (O-linked (GlcNAc) serine) is linked at Ser-208.

The protein belongs to the peptidase T1B family. As to quaternary structure, the 26S proteasome consists of a 20S proteasome core and two 19S regulatory subunits. The 20S proteasome core is a barrel-shaped complex made of 28 subunits that are arranged in four stacked rings. The two outer rings are each formed by seven alpha subunits, and the two inner rings are formed by seven beta subunits. The proteolytic activity is exerted by three beta-subunits PSMB5, PSMB6 and PSMB7. Interacts with SERPINB2. Interacts with RFPL4A. Detected in liver (at protein level).

The protein localises to the cytoplasm. The protein resides in the nucleus. In terms of biological role, non-catalytic component of the 20S core proteasome complex involved in the proteolytic degradation of most intracellular proteins. This complex plays numerous essential roles within the cell by associating with different regulatory particles. Associated with two 19S regulatory particles, forms the 26S proteasome and thus participates in the ATP-dependent degradation of ubiquitinated proteins. The 26S proteasome plays a key role in the maintenance of protein homeostasis by removing misfolded or damaged proteins that could impair cellular functions, and by removing proteins whose functions are no longer required. Associated with the PA200 or PA28, the 20S proteasome mediates ubiquitin-independent protein degradation. This type of proteolysis is required in several pathways including spermatogenesis (20S-PA200 complex) or generation of a subset of MHC class I-presented antigenic peptides (20S-PA28 complex). This chain is Proteasome subunit beta type-1 (Psmb1), found in Mus musculus (Mouse).